The chain runs to 307 residues: Pyridoxal 5'-phosphate synthase subunit PdxS (307 aa).

A D-ribose 5-phosphate-binding site is contributed by Asp37. Residue Lys94 is the Schiff-base intermediate with D-ribose 5-phosphate of the active site. A D-ribose 5-phosphate-binding site is contributed by Gly166. Arg178 serves as a coordination point for D-glyceraldehyde 3-phosphate. D-ribose 5-phosphate contacts are provided by residues Gly227 and 248–249; that span reads GS.

The protein belongs to the PdxS/SNZ family. As to quaternary structure, in the presence of PdxT, forms a dodecamer of heterodimers.

It catalyses the reaction aldehydo-D-ribose 5-phosphate + D-glyceraldehyde 3-phosphate + L-glutamine = pyridoxal 5'-phosphate + L-glutamate + phosphate + 3 H2O + H(+). Its pathway is cofactor biosynthesis; pyridoxal 5'-phosphate biosynthesis. In terms of biological role, catalyzes the formation of pyridoxal 5'-phosphate from ribose 5-phosphate (RBP), glyceraldehyde 3-phosphate (G3P) and ammonia. The ammonia is provided by the PdxT subunit. Can also use ribulose 5-phosphate and dihydroxyacetone phosphate as substrates, resulting from enzyme-catalyzed isomerization of RBP and G3P, respectively. In Mycobacterium leprae (strain Br4923), this protein is Pyridoxal 5'-phosphate synthase subunit PdxS.